Reading from the N-terminus, the 136-residue chain is Mediator of RNA polymerase II transcription subunit 31 (136 aa).

Residues 117 to 128 (AEQQQQQQPQAP) are compositionally biased toward low complexity. A disordered region spans residues 117–136 (AEQQQQQQPQAPSHANTTSK).

This sequence belongs to the Mediator complex subunit 31 family. Component of the Mediator complex.

Its subcellular location is the nucleus. In terms of biological role, component of the Mediator complex, a coactivator involved in the regulated transcription of nearly all RNA polymerase II-dependent genes. Mediator functions as a bridge to convey information from gene-specific regulatory proteins to the basal RNA polymerase II transcription machinery. Mediator is recruited to promoters by direct interactions with regulatory proteins and serves as a scaffold for the assembly of a functional preinitiation complex with RNA polymerase II and the general transcription factors. In Danio rerio (Zebrafish), this protein is Mediator of RNA polymerase II transcription subunit 31 (med31).